The sequence spans 475 residues: Phosphoglucosamine mutase (475 aa).

The Phosphoserine intermediate role is filled by S126. S126, D265, D267, and D269 together coordinate Mg(2+). At S126 the chain carries Phosphoserine.

This sequence belongs to the phosphohexose mutase family. Mg(2+) is required as a cofactor. In terms of processing, activated by phosphorylation.

The catalysed reaction is alpha-D-glucosamine 1-phosphate = D-glucosamine 6-phosphate. Catalyzes the conversion of glucosamine-6-phosphate to glucosamine-1-phosphate. The polypeptide is Phosphoglucosamine mutase (Synechococcus sp. (strain ATCC 27144 / PCC 6301 / SAUG 1402/1) (Anacystis nidulans)).